The following is a 310-amino-acid chain: Deoxypodophyllotoxin synthase (310 aa).

A Fe2OG dioxygenase domain is found at 159 to 258 (STNYLLHFMR…RLSTSSFSFP (100 aa)). Residues His184, Asp186, and His239 each coordinate Fe cation. Residue Arg249 coordinates 2-oxoglutarate.

It belongs to the iron/ascorbate-dependent oxidoreductase family. Requires Fe(2+) as cofactor. As to expression, mostly expressed in leaves and stems.

The catalysed reaction is (-)-yatein + 2-oxoglutarate + O2 = (-)-deoxypodophyllotoxin + succinate + CO2 + H2O. It functions in the pathway aromatic compound metabolism; phenylpropanoid biosynthesis. Its function is as follows. 2-oxoglutarate-dependent dioxygenase involved in the biosynthesis of etoposide, a chemotherapeutic compound of the topoisomerase inhibitor family. Catalyzes the conversion of yatein to deoxypodophyllotoxin. Can also use, to some extent, demethylyatein as substrate. This chain is Deoxypodophyllotoxin synthase, found in Sinopodophyllum hexandrum (Himalayan may apple).